We begin with the raw amino-acid sequence, 838 residues long: Protein translocase subunit SecA (838 aa).

Residues Gln-86, 104–108 (GEGKT), and Asp-493 each bind ATP. Residues 793–838 (NTQAVSGGEDSGKKKTKKPVVKSNTVKRNDPCPCGSGKKYKNCHGQ) are disordered. Residues Cys-824, Cys-826, Cys-835, and His-836 each coordinate Zn(2+).

The protein belongs to the SecA family. As to quaternary structure, monomer and homodimer. Part of the essential Sec protein translocation apparatus which comprises SecA, SecYEG and auxiliary proteins SecDF. Other proteins may also be involved. Zn(2+) serves as cofactor.

The protein resides in the cell membrane. It is found in the cytoplasm. The enzyme catalyses ATP + H2O + cellular proteinSide 1 = ADP + phosphate + cellular proteinSide 2.. Functionally, part of the Sec protein translocase complex. Interacts with the SecYEG preprotein conducting channel. Has a central role in coupling the hydrolysis of ATP to the transfer of proteins into and across the cell membrane, serving as an ATP-driven molecular motor driving the stepwise translocation of polypeptide chains across the membrane. The sequence is that of Protein translocase subunit SecA from Oceanobacillus iheyensis (strain DSM 14371 / CIP 107618 / JCM 11309 / KCTC 3954 / HTE831).